The sequence spans 192 residues: Adenylate kinase (192 aa).

An ATP-binding site is contributed by 12-17 (GSGKTT). Positions 34–63 (STGDLLRAEVASGSELGKTIDSFISKGNLV) are NMP. Residues T35, R40, 61 to 63 (NLV), 88 to 91 (GYPR), and Q95 contribute to the AMP site. Positions 130-136 (GRNRGAD) are LID. R131 is a binding site for ATP. Residues R133 and R145 each contribute to the AMP site. R173 serves as a coordination point for ATP.

This sequence belongs to the adenylate kinase family. As to quaternary structure, monomer.

The protein resides in the cytoplasm. The enzyme catalyses AMP + ATP = 2 ADP. It participates in purine metabolism; AMP biosynthesis via salvage pathway; AMP from ADP: step 1/1. In terms of biological role, catalyzes the reversible transfer of the terminal phosphate group between ATP and AMP. Plays an important role in cellular energy homeostasis and in adenine nucleotide metabolism. The protein is Adenylate kinase of Campylobacter jejuni subsp. jejuni serotype O:6 (strain 81116 / NCTC 11828).